The following is a 197-amino-acid chain: Imidazoleglycerol-phosphate dehydratase (197 aa).

Belongs to the imidazoleglycerol-phosphate dehydratase family.

Its subcellular location is the cytoplasm. The catalysed reaction is D-erythro-1-(imidazol-4-yl)glycerol 3-phosphate = 3-(imidazol-4-yl)-2-oxopropyl phosphate + H2O. It participates in amino-acid biosynthesis; L-histidine biosynthesis; L-histidine from 5-phospho-alpha-D-ribose 1-diphosphate: step 6/9. This chain is Imidazoleglycerol-phosphate dehydratase, found in Chromohalobacter salexigens (strain ATCC BAA-138 / DSM 3043 / CIP 106854 / NCIMB 13768 / 1H11).